A 150-amino-acid chain; its full sequence is Ribonuclease H (150 aa).

Residues 1–141 (MKFIEVHTDG…VDVLARNQAI (141 aa)) enclose the RNase H type-1 domain. Positions 9, 47, 69, and 133 each coordinate Mg(2+).

The protein belongs to the RNase H family. As to quaternary structure, monomer. Mg(2+) is required as a cofactor.

It is found in the cytoplasm. It carries out the reaction Endonucleolytic cleavage to 5'-phosphomonoester.. In terms of biological role, endonuclease that specifically degrades the RNA of RNA-DNA hybrids. The sequence is that of Ribonuclease H from Xanthomonas euvesicatoria pv. vesicatoria (strain 85-10) (Xanthomonas campestris pv. vesicatoria).